Consider the following 37-residue polypeptide: Large ribosomal subunit protein bL36 (37 aa).

The protein belongs to the bacterial ribosomal protein bL36 family.

The polypeptide is Large ribosomal subunit protein bL36 (Caldicellulosiruptor saccharolyticus (strain ATCC 43494 / DSM 8903 / Tp8T 6331)).